Reading from the N-terminus, the 1199-residue chain is DNA-directed RNA polymerase subunit beta' (1199 aa).

C60, C62, C75, and C78 together coordinate Zn(2+). Residues D449, D451, and D453 each coordinate Mg(2+). Residues C818, C892, C899, and C902 each coordinate Zn(2+).

This sequence belongs to the RNA polymerase beta' chain family. In terms of assembly, RNAP is composed of a core of 2 alpha, a beta and a beta' subunit. The core is associated with a delta subunit, and at least one of epsilon or omega. When a sigma factor is associated with the core the holoenzyme is formed, which can initiate transcription. Mg(2+) is required as a cofactor. Zn(2+) serves as cofactor.

It catalyses the reaction RNA(n) + a ribonucleoside 5'-triphosphate = RNA(n+1) + diphosphate. In terms of biological role, DNA-dependent RNA polymerase catalyzes the transcription of DNA into RNA using the four ribonucleoside triphosphates as substrates. This chain is DNA-directed RNA polymerase subunit beta', found in Bacillus subtilis (strain 168).